The chain runs to 440 residues: 5-hydroxytryptamine receptor 6 (440 aa).

Residues 1-27 (MVPEPGPVNSSTPAWGPGPPPAPGGSG) lie on the Extracellular side of the membrane. A glycan (N-linked (GlcNAc...) asparagine) is linked at N9. Residues 28 to 52 (WVAAALCVVIVLTAAANSLLIALIC) form a helical membrane-spanning segment. The Cytoplasmic portion of the chain corresponds to 53–62 (TQPALRNTSN). Residues 63 to 88 (FFLVSLFTSDLMVGLVVMPPAMLNAL) traverse the membrane as a helical segment. The Extracellular segment spans residues 89–96 (YGRWVLAR). Residues 97–122 (GLCLLWTAFDVMCCSASILNLCLISL) traverse the membrane as a helical segment. C99 and C180 are disulfide-bonded. Residue D106 coordinates serotonin. Residues 123-142 (DRYLLILSPLRYKLRMTAPR) lie on the Cytoplasmic side of the membrane. Residues 143–167 (ALALILGAWSLAALASFLPLLLGWH) traverse the membrane as a helical segment. At 168-185 (ELGKARTSAPGQCRLLAS) the chain is on the extracellular side. A helical membrane pass occupies residues 186–209 (LPYVLVASGVTFFLPSGAICFTYC). Over 210-268 (RILLAARKQAVQVASLTTGTATAGQALETLQVPRTPRPGMESADSRRLTTKHSRKALKA) the chain is Cytoplasmic. A helical membrane pass occupies residues 269–295 (SLTLGILLSMFFVTWLPFFVASIAQAV). The Extracellular portion of the chain corresponds to 296–301 (CDCISP). The helical transmembrane segment at 302–325 (GLFDVLTWLGYCNSTMNPIIYPLF) threads the bilayer. Over 326 to 440 (MRDFKRALGR…RQHPLGSPMN (115 aa)) the chain is Cytoplasmic.

It belongs to the G-protein coupled receptor 1 family. As to quaternary structure, interacts with CDK5. Interacts with MTOR. Interacts with RPTOR and NF1.

The protein localises to the cell membrane. Functionally, G-protein coupled receptor for 5-hydroxytryptamine (serotonin), a biogenic hormone that functions as a neurotransmitter, a hormone and a mitogen. Also has a high affinity for tricyclic psychotropic drugs. Ligand binding causes a conformation change that triggers signaling via guanine nucleotide-binding proteins (G proteins) and modulates the activity of downstream effectors. HTR6 is coupled to G(s) G alpha proteins and mediates activation of adenylate cyclase activity. Controls pyramidal neurons migration during corticogenesis, through the regulation of CDK5 activity. Is an activator of mTOR signaling. The polypeptide is 5-hydroxytryptamine receptor 6 (Mus musculus (Mouse)).